A 525-amino-acid chain; its full sequence is Chromosomal replication initiator protein DnaA (525 aa).

The domain I, interacts with DnaA modulators stretch occupies residues 1-71; it reads MNDFWQHCSA…ADLAREFWNT (71 aa). The tract at residues 71 to 188 is domain II; sequence TPIEVQFVLD…GEADSMYERS (118 aa). The disordered stretch occupies residues 160-182; it reads AAAGRRTWRPGPGAAPANGGEAD. Residues 169-181 show a composition bias toward low complexity; sequence PGPGAAPANGGEA. Positions 189–405 are domain III, AAA+ region; the sequence is KLNPVLTFDN…GALRKILAYS (217 aa). ATP-binding residues include Gly-233, Gly-235, Lys-236, and Thr-237. Positions 406-525 are domain IV, binds dsDNA; sequence KFHGREISIE…LHVLEQTLKG (120 aa).

The protein belongs to the DnaA family. Oligomerizes as a right-handed, spiral filament on DNA at oriC.

The protein localises to the cytoplasm. Its function is as follows. Plays an essential role in the initiation and regulation of chromosomal replication. ATP-DnaA binds to the origin of replication (oriC) to initiate formation of the DNA replication initiation complex once per cell cycle. Binds the DnaA box (a 9 base pair repeat at the origin) and separates the double-stranded (ds)DNA. Forms a right-handed helical filament on oriC DNA; dsDNA binds to the exterior of the filament while single-stranded (ss)DNA is stabiized in the filament's interior. The ATP-DnaA-oriC complex binds and stabilizes one strand of the AT-rich DNA unwinding element (DUE), permitting loading of DNA polymerase. After initiation quickly degrades to an ADP-DnaA complex that is not apt for DNA replication. Binds acidic phospholipids. This chain is Chromosomal replication initiator protein DnaA, found in Burkholderia cenocepacia (strain ATCC BAA-245 / DSM 16553 / LMG 16656 / NCTC 13227 / J2315 / CF5610) (Burkholderia cepacia (strain J2315)).